We begin with the raw amino-acid sequence, 485 residues long: Glutamyl-tRNA(Gln) amidotransferase subunit A (485 aa).

Residues Lys-78 and Ser-153 each act as charge relay system in the active site. Ser-177 functions as the Acyl-ester intermediate in the catalytic mechanism.

The protein belongs to the amidase family. GatA subfamily. As to quaternary structure, heterotrimer of A, B and C subunits.

The catalysed reaction is L-glutamyl-tRNA(Gln) + L-glutamine + ATP + H2O = L-glutaminyl-tRNA(Gln) + L-glutamate + ADP + phosphate + H(+). In terms of biological role, allows the formation of correctly charged Gln-tRNA(Gln) through the transamidation of misacylated Glu-tRNA(Gln) in organisms which lack glutaminyl-tRNA synthetase. The reaction takes place in the presence of glutamine and ATP through an activated gamma-phospho-Glu-tRNA(Gln). The chain is Glutamyl-tRNA(Gln) amidotransferase subunit A from Geobacter sulfurreducens (strain ATCC 51573 / DSM 12127 / PCA).